We begin with the raw amino-acid sequence, 336 residues long: Ketol-acid reductoisomerase (NADP(+)) 1 (336 aa).

A KARI N-terminal Rossmann domain is found at 2-181 (AKVYYEKDVT…GATRAGVLET (180 aa)). Residues 25–28 (YGSQ), Arg48, Ser52, and 82–85 (DELQ) contribute to the NADP(+) site. His107 is an active-site residue. Gly133 lines the NADP(+) pocket. A KARI C-terminal knotted domain is found at 182-327 (TFKEETETDL…RKLREMMPFV (146 aa)). 4 residues coordinate Mg(2+): Asp190, Glu194, Glu226, and Glu230. Ser251 is a binding site for substrate.

Belongs to the ketol-acid reductoisomerase family. The cofactor is Mg(2+).

It carries out the reaction (2R)-2,3-dihydroxy-3-methylbutanoate + NADP(+) = (2S)-2-acetolactate + NADPH + H(+). It catalyses the reaction (2R,3R)-2,3-dihydroxy-3-methylpentanoate + NADP(+) = (S)-2-ethyl-2-hydroxy-3-oxobutanoate + NADPH + H(+). It functions in the pathway amino-acid biosynthesis; L-isoleucine biosynthesis; L-isoleucine from 2-oxobutanoate: step 2/4. It participates in amino-acid biosynthesis; L-valine biosynthesis; L-valine from pyruvate: step 2/4. Its function is as follows. Involved in the biosynthesis of branched-chain amino acids (BCAA). Catalyzes an alkyl-migration followed by a ketol-acid reduction of (S)-2-acetolactate (S2AL) to yield (R)-2,3-dihydroxy-isovalerate. In the isomerase reaction, S2AL is rearranged via a Mg-dependent methyl migration to produce 3-hydroxy-3-methyl-2-ketobutyrate (HMKB). In the reductase reaction, this 2-ketoacid undergoes a metal-dependent reduction by NADPH to yield (R)-2,3-dihydroxy-isovalerate. This chain is Ketol-acid reductoisomerase (NADP(+)) 1, found in Bacillus cereus (strain ZK / E33L).